The primary structure comprises 175 residues: Ribosome maturation factor RimM (175 aa).

The 78-residue stretch at 98–175 (EGEYYWYQLE…EMRVDWDADF (78 aa)) folds into the PRC barrel domain.

It belongs to the RimM family. Binds ribosomal protein uS19.

It localises to the cytoplasm. Its function is as follows. An accessory protein needed during the final step in the assembly of 30S ribosomal subunit, possibly for assembly of the head region. Essential for efficient processing of 16S rRNA. May be needed both before and after RbfA during the maturation of 16S rRNA. It has affinity for free ribosomal 30S subunits but not for 70S ribosomes. This is Ribosome maturation factor RimM from Pseudomonas paraeruginosa (strain DSM 24068 / PA7) (Pseudomonas aeruginosa (strain PA7)).